Here is a 351-residue protein sequence, read N- to C-terminus: Ca(2+)/H(+) antiporter ChaA (351 aa).

11 helical membrane-spanning segments follow: residues 4–24, 25–45, 59–79, 86–106, 130–150, 156–176, 205–225, 241–261, 282–302, 303–323, and 331–351; these read IFFILVAAGVPLSVIGSLMHW, PSAVLFAVYCVTIIALASYMG, IGGLLNATFGNAVELIISLFA, GIVLASLTGSVLGNLLLVAGL, GLLIFAIIVAFVIPEVFSVGM, LNLSIGISIIMILLYVAALYF, VATIVLFAATIVVAYISENLV, FIGVIIVAIVGNAAEHASAII, IAMFVAPVLVICSIFFPTSMP, LVFTLPELVAMVSAVLLMIAI, and WFEGATLLAAYVIMAIGFFLL.

Belongs to the Ca(2+):cation antiporter (CaCA) (TC 2.A.19) family. Cation/proton exchanger (CAX) subfamily. In terms of assembly, homotrimer.

It is found in the cell membrane. With respect to regulation, calcium efflux is tightly regulated by intracellular pH. Ca(+)/H(+) antiporter that extrudes calcium in exchange for external protons. Does not transport sodium or potassium. The protein is Ca(2+)/H(+) antiporter ChaA (chaA) of Bacillus subtilis (strain 168).